Here is a 274-residue protein sequence, read N- to C-terminus: Rhamnulose-1-phosphate aldolase (274 aa).

Glu117 is a catalytic residue. The Zn(2+) site is built by His141, His143, and His212.

The protein belongs to the aldolase class II family. RhaD subfamily. In terms of assembly, homotetramer. Zn(2+) is required as a cofactor.

It is found in the cytoplasm. The enzyme catalyses L-rhamnulose 1-phosphate = (S)-lactaldehyde + dihydroxyacetone phosphate. It functions in the pathway carbohydrate degradation; L-rhamnose degradation; glycerone phosphate from L-rhamnose: step 3/3. In terms of biological role, catalyzes the reversible cleavage of L-rhamnulose-1-phosphate to dihydroxyacetone phosphate (DHAP) and L-lactaldehyde. The polypeptide is Rhamnulose-1-phosphate aldolase (Yersinia pseudotuberculosis serotype IB (strain PB1/+)).